The primary structure comprises 362 residues: Phosphoserine aminotransferase (362 aa).

Positions 9 and 42 each coordinate L-glutamate. Pyridoxal 5'-phosphate-binding positions include 76–77 (GR), tryptophan 102, threonine 153, aspartate 174, and glutamine 197. Lysine 198 is subject to N6-(pyridoxal phosphate)lysine. 239-240 (NT) serves as a coordination point for pyridoxal 5'-phosphate.

This sequence belongs to the class-V pyridoxal-phosphate-dependent aminotransferase family. SerC subfamily. As to quaternary structure, homodimer. Requires pyridoxal 5'-phosphate as cofactor.

The protein resides in the cytoplasm. The enzyme catalyses O-phospho-L-serine + 2-oxoglutarate = 3-phosphooxypyruvate + L-glutamate. It carries out the reaction 4-(phosphooxy)-L-threonine + 2-oxoglutarate = (R)-3-hydroxy-2-oxo-4-phosphooxybutanoate + L-glutamate. It functions in the pathway amino-acid biosynthesis; L-serine biosynthesis; L-serine from 3-phospho-D-glycerate: step 2/3. Its pathway is cofactor biosynthesis; pyridoxine 5'-phosphate biosynthesis; pyridoxine 5'-phosphate from D-erythrose 4-phosphate: step 3/5. In terms of biological role, catalyzes the reversible conversion of 3-phosphohydroxypyruvate to phosphoserine and of 3-hydroxy-2-oxo-4-phosphonooxybutanoate to phosphohydroxythreonine. This Klebsiella pneumoniae subsp. pneumoniae (strain ATCC 700721 / MGH 78578) protein is Phosphoserine aminotransferase.